The sequence spans 1279 residues: ATP-dependent helicase/nuclease subunit A (1279 aa).

The region spanning 4–499 is the UvrD-like helicase ATP-binding domain; sequence TKWTDEQRQA…VKLFKNFRSR (496 aa). Residue 25 to 32 participates in ATP binding; it reads AGAGAGKT. The UvrD-like helicase C-terminal domain maps to 526-853; sequence EEALKVGASY…RIMSIHKSKG (328 aa).

This sequence belongs to the helicase family. AddA subfamily. As to quaternary structure, heterodimer of AddA and AddB/RexB. Mg(2+) serves as cofactor.

It carries out the reaction Couples ATP hydrolysis with the unwinding of duplex DNA by translocating in the 3'-5' direction.. It catalyses the reaction ATP + H2O = ADP + phosphate + H(+). In terms of biological role, the heterodimer acts as both an ATP-dependent DNA helicase and an ATP-dependent, dual-direction single-stranded exonuclease. Recognizes the chi site generating a DNA molecule suitable for the initiation of homologous recombination. The AddA nuclease domain is required for chi fragment generation; this subunit has the helicase and 3' -&gt; 5' nuclease activities. This Clostridium botulinum (strain 657 / Type Ba4) protein is ATP-dependent helicase/nuclease subunit A.